We begin with the raw amino-acid sequence, 451 residues long: uncharacterized protein (451 aa).

Positions Met1 to Gly22 are cleaved as a signal peptide. Asn25, Asn45, Asn209, Asn326, and Asn402 each carry an N-linked (GlcNAc...) asparagine glycan.

The protein localises to the secreted. This is an uncharacterized protein from Dictyostelium discoideum (Social amoeba).